Consider the following 126-residue polypeptide: Large ribosomal subunit protein bL12 (126 aa).

This sequence belongs to the bacterial ribosomal protein bL12 family. As to quaternary structure, homodimer. Part of the ribosomal stalk of the 50S ribosomal subunit. Forms a multimeric L10(L12)X complex, where L10 forms an elongated spine to which 2 to 4 L12 dimers bind in a sequential fashion. Binds GTP-bound translation factors.

Functionally, forms part of the ribosomal stalk which helps the ribosome interact with GTP-bound translation factors. Is thus essential for accurate translation. This Desulforudis audaxviator (strain MP104C) protein is Large ribosomal subunit protein bL12.